Reading from the N-terminus, the 335-residue chain is tRNA-dihydrouridine(20/20a) synthase (335 aa).

FMN contacts are provided by residues 19–21 (PMM) and Q72. C102 (proton donor) is an active-site residue. FMN-binding positions include K141, H173, 213–215 (NGG), and 235–236 (GR).

Belongs to the Dus family. DusA subfamily. FMN is required as a cofactor.

The enzyme catalyses 5,6-dihydrouridine(20) in tRNA + NADP(+) = uridine(20) in tRNA + NADPH + H(+). The catalysed reaction is 5,6-dihydrouridine(20) in tRNA + NAD(+) = uridine(20) in tRNA + NADH + H(+). It catalyses the reaction 5,6-dihydrouridine(20a) in tRNA + NADP(+) = uridine(20a) in tRNA + NADPH + H(+). It carries out the reaction 5,6-dihydrouridine(20a) in tRNA + NAD(+) = uridine(20a) in tRNA + NADH + H(+). Its function is as follows. Catalyzes the synthesis of 5,6-dihydrouridine (D), a modified base found in the D-loop of most tRNAs, via the reduction of the C5-C6 double bond in target uridines. Specifically modifies U20 and U20a in tRNAs. The chain is tRNA-dihydrouridine(20/20a) synthase from Xanthomonas campestris pv. campestris (strain ATCC 33913 / DSM 3586 / NCPPB 528 / LMG 568 / P 25).